Reading from the N-terminus, the 105-residue chain is ATP synthase subunit c (105 aa).

Transmembrane regions (helical) follow at residues phenylalanine 3–aspartate 23, serine 32–glycine 52, and valine 78–isoleucine 98.

Belongs to the ATPase C chain family. As to quaternary structure, F-type ATPases have 2 components, F(1) - the catalytic core - and F(0) - the membrane proton channel. F(1) has five subunits: alpha(3), beta(3), gamma(1), delta(1), epsilon(1). F(0) has three main subunits: a(1), b(2) and c(10-14). The alpha and beta chains form an alternating ring which encloses part of the gamma chain. F(1) is attached to F(0) by a central stalk formed by the gamma and epsilon chains, while a peripheral stalk is formed by the delta and b chains.

It is found in the cell inner membrane. Functionally, f(1)F(0) ATP synthase produces ATP from ADP in the presence of a proton or sodium gradient. F-type ATPases consist of two structural domains, F(1) containing the extramembraneous catalytic core and F(0) containing the membrane proton channel, linked together by a central stalk and a peripheral stalk. During catalysis, ATP synthesis in the catalytic domain of F(1) is coupled via a rotary mechanism of the central stalk subunits to proton translocation. Key component of the F(0) channel; it plays a direct role in translocation across the membrane. A homomeric c-ring of between 10-14 subunits forms the central stalk rotor element with the F(1) delta and epsilon subunits. This Helicobacter acinonychis (strain Sheeba) protein is ATP synthase subunit c.